An 847-amino-acid chain; its full sequence is Protein SEY1 (847 aa).

Over 1–720 (MSSGEPLSET…KRSIVQHVTQ (720 aa)) the chain is Cytoplasmic. A GB1/RHD3-type G domain is found at 55 to 290 (GHNYHIVAVF…VENDIFKPEY (236 aa)). Residue 65 to 72 (GSQSTGKS) coordinates GTP. Residues 721–741 (IPYYIYIIILLLGWNEFMAVV) form a helical membrane-spanning segment. Residues 742-744 (RNP) lie on the Lumenal side of the membrane. The helical transmembrane segment at 745 to 765 (FTFSLAIILGASLYILYTMNL) threads the bilayer. Over 766–847 (LKPALTVTQR…VTSLNVVEEE (82 aa)) the chain is Cytoplasmic.

This sequence belongs to the TRAFAC class dynamin-like GTPase superfamily. GB1/RHD3 GTPase family. RHD3 subfamily.

The protein resides in the endoplasmic reticulum membrane. Functionally, cooperates with the reticulon proteins and tubule-shaping DP1 family proteins to generate and maintain the structure of the tubular endoplasmic reticulum network. Has GTPase activity, which is required for its function in ER organization. The polypeptide is Protein SEY1 (Lodderomyces elongisporus (strain ATCC 11503 / CBS 2605 / JCM 1781 / NBRC 1676 / NRRL YB-4239) (Yeast)).